Consider the following 351-residue polypeptide: D-threonate 4-phosphate dehydrogenase (351 aa).

2 residues coordinate substrate: H147 and T148. A divalent metal cation contacts are provided by H177, H221, and H276. Residues K284, N293, and R302 each contribute to the substrate site.

It belongs to the PdxA family. PdxA2 subfamily. In terms of assembly, homodimer. Requires a divalent metal cation as cofactor.

It carries out the reaction 4-O-phospho-D-threonate + NAD(+) = dihydroxyacetone phosphate + CO2 + NADH. Catalyzes the NAD-dependent oxidation and subsequent decarboxylation of D-threonate 4-phosphate to produce dihydroxyacetone phosphate (DHAP). Can also use 4-hydroxy-L-threonine 4-phosphate as substrate. This is D-threonate 4-phosphate dehydrogenase from Bordetella bronchiseptica (strain ATCC BAA-588 / NCTC 13252 / RB50) (Alcaligenes bronchisepticus).